The primary structure comprises 172 residues: Small ribosomal subunit protein uS5 (172 aa).

The region spanning Leu-17–Ile-80 is the S5 DRBM domain.

The protein belongs to the universal ribosomal protein uS5 family. In terms of assembly, part of the 30S ribosomal subunit. Contacts proteins S4 and S8.

Functionally, with S4 and S12 plays an important role in translational accuracy. In terms of biological role, located at the back of the 30S subunit body where it stabilizes the conformation of the head with respect to the body. The polypeptide is Small ribosomal subunit protein uS5 (Variovorax paradoxus (strain S110)).